A 372-amino-acid polypeptide reads, in one-letter code: Lipoyl synthase, mitochondrial (372 aa).

A mitochondrion-targeting transit peptide spans 1–27 (MSLRCGDAARTLGPRVFGRYFCSPVRP). The [4Fe-4S] cluster site is built by Cys-106, Cys-111, Cys-117, Cys-137, Cys-141, Cys-144, and Ser-352. In terms of domain architecture, Radical SAM core spans 122-341 (EYATATATIM…EKVGNELGFH (220 aa)).

It belongs to the radical SAM superfamily. Lipoyl synthase family. [4Fe-4S] cluster is required as a cofactor.

The protein resides in the mitochondrion. The catalysed reaction is [[Fe-S] cluster scaffold protein carrying a second [4Fe-4S](2+) cluster] + N(6)-octanoyl-L-lysyl-[protein] + 2 oxidized [2Fe-2S]-[ferredoxin] + 2 S-adenosyl-L-methionine + 4 H(+) = [[Fe-S] cluster scaffold protein] + N(6)-[(R)-dihydrolipoyl]-L-lysyl-[protein] + 4 Fe(3+) + 2 hydrogen sulfide + 2 5'-deoxyadenosine + 2 L-methionine + 2 reduced [2Fe-2S]-[ferredoxin]. The protein operates within protein modification; protein lipoylation via endogenous pathway; protein N(6)-(lipoyl)lysine from octanoyl-[acyl-carrier-protein]: step 2/2. Functionally, catalyzes the radical-mediated insertion of two sulfur atoms into the C-6 and C-8 positions of the octanoyl moiety bound to the lipoyl domains of lipoate-dependent enzymes, thereby converting the octanoylated domains into lipoylated derivatives. The sequence is that of Lipoyl synthase, mitochondrial from Homo sapiens (Human).